The chain runs to 563 residues: Chaperonin GroEL 1 (563 aa).

Residues 29–32 (TIGP), 86–90 (DGTTT), Gly-413, and Asp-492 contribute to the ATP site. The interval 520-541 (DKPEPPSAPGAEGGDPMGGMGG) is disordered. Positions 530–541 (AEGGDPMGGMGG) are enriched in gly residues.

The protein belongs to the chaperonin (HSP60) family. Forms a cylinder of 14 subunits composed of two heptameric rings stacked back-to-back. Interacts with the co-chaperonin GroES.

The protein resides in the cytoplasm. The catalysed reaction is ATP + H2O + a folded polypeptide = ADP + phosphate + an unfolded polypeptide.. In terms of biological role, together with its co-chaperonin GroES, plays an essential role in assisting protein folding. The GroEL-GroES system forms a nano-cage that allows encapsulation of the non-native substrate proteins and provides a physical environment optimized to promote and accelerate protein folding. The protein is Chaperonin GroEL 1 of Prochlorococcus marinus (strain NATL1A).